The primary structure comprises 864 residues: Coiled-coil and C2 domain-containing protein 1B (864 aa).

A disordered region spans residues 82 to 154 (QDCMTDMTGE…VNSSVAEIQH (73 aa)). Composition is skewed to acidic residues over residues 89 to 104 (TGED…EELL) and 111 to 129 (VGEE…EESE). Residues 91-118 (EDDDDDLEEDEELLAELQDVVGEEEEVE) adopt a coiled-coil conformation. Polar residues predominate over residues 142-154 (EQQVNSSVAEIQH). Residues 162 to 209 (GMLQVLEERIGNYKEAISNAKLSNESAKARRYERGLKTLESMLSAARQ) are a coiled coil. Positions 218–249 (IPPPVACGKPAVSPTTDVPTTDTSKQGLGDLN) are disordered. Low complexity predominate over residues 229 to 241 (VSPTTDVPTTDTS). Residues 385 to 412 (VGSLLQALQQRMEKYKSAAQQAKSSGDD) adopt a coiled-coil conformation. Disordered stretches follow at residues 441–463 (AELP…EEGS) and 478–502 (AGED…PTQL). The span at 444–453 (PVPPGFPPLP) shows a compositional bias: pro residues. 2 coiled-coil regions span residues 464-488 (VEKA…DEDE) and 535-564 (PAVQ…KNDL). Residues 685–820 (HFEDKTLKIV…ETQCEIREIV (136 aa)) enclose the C2 domain.

The protein belongs to the CC2D1 family.

The chain is Coiled-coil and C2 domain-containing protein 1B (cc2d1b) from Xenopus laevis (African clawed frog).